The sequence spans 842 residues: Protein P (842 aa).

The segment at 1–177 (MPLSYQHFRR…FCGSPYSWEQ (177 aa)) is terminal protein domain (TP). Residues 178-345 (ELHHGAFLDG…YCLTHLVNLL (168 aa)) form a spacer region. The tract at residues 205–271 (SRPPVGSSIQ…RHAKNIASRP (67 aa)) is disordered. Residues 223 to 239 (GPQSQQRPLDGSQQGRS) show a composition bias toward polar residues. The segment at 346-689 (EDWGPCTEHG…YLNLYPVARQ (344 aa)) is polymerase/reverse transcriptase domain (RT). A Reverse transcriptase domain is found at 356–599 (KHHIRIPRTP…YSLNFMGYVI (244 aa)). The Mg(2+) site is built by Asp428, Asp550, and Asp551.

It belongs to the hepadnaviridae P protein family.

It carries out the reaction DNA(n) + a 2'-deoxyribonucleoside 5'-triphosphate = DNA(n+1) + diphosphate. It catalyses the reaction Endonucleolytic cleavage to 5'-phosphomonoester.. Activated by host HSP70 and HSP40 in vitro to be able to bind the epsilon loop of the pgRNA. Because deletion of the RNase H region renders the protein partly chaperone-independent, the chaperones may be needed indirectly to relieve occlusion of the RNA-binding site by this domain. Inhibited by several reverse-transcriptase inhibitors: Lamivudine, Adefovir and Entecavir. Multifunctional enzyme that converts the viral RNA genome into dsDNA in viral cytoplasmic capsids. This enzyme displays a DNA polymerase activity that can copy either DNA or RNA templates, and a ribonuclease H (RNase H) activity that cleaves the RNA strand of RNA-DNA heteroduplexes in a partially processive 3'- to 5'-endonucleasic mode. Neo-synthesized pregenomic RNA (pgRNA) are encapsidated together with the P protein, and reverse-transcribed inside the nucleocapsid. Initiation of reverse-transcription occurs first by binding the epsilon loop on the pgRNA genome, and is initiated by protein priming, thereby the 5'-end of (-)DNA is covalently linked to P protein. Partial (+)DNA is synthesized from the (-)DNA template and generates the relaxed circular DNA (RC-DNA) genome. After budding and infection, the RC-DNA migrates in the nucleus, and is converted into a plasmid-like covalently closed circular DNA (cccDNA). The activity of P protein does not seem to be necessary for cccDNA generation, and is presumably released from (+)DNA by host nuclear DNA repair machinery. The sequence is that of Protein P from Hepatitis B virus genotype E subtype ayw4 (isolate Kou) (HBV-E).